A 266-amino-acid chain; its full sequence is Very-long-chain aldehyde decarbonylase GL1-11 (266 aa).

The next 4 membrane-spanning stretches (helical) occupy residues 25-45, 74-94, 106-126, and 163-183; these read VVTFLLHETVFFLSGLPSLLF, ILYHVCVNLPVMVLSYPAFKF, WTVIVSQVLFYFVLEDFIFYW, and ILFLGFATIVGPALTGPHLFT. Positions 113-248 constitute a Fatty acid hydroxylase domain; sequence VLFYFVLEDF…FVYMDWLFGT (136 aa).

Belongs to the sterol desaturase family. As to quaternary structure, homodimer.

It is found in the endoplasmic reticulum membrane. It catalyses the reaction a long-chain fatty aldehyde + 2 NADPH + O2 + H(+) = a long-chain alkane + formate + 2 NADP(+) + H2O. Its function is as follows. Aldehyde decarbonylase involved in the conversion of aldehydes to alkanes. Core component of a very-long-chain alkane synthesis complex. The polypeptide is Very-long-chain aldehyde decarbonylase GL1-11 (Oryza sativa subsp. indica (Rice)).